A 146-amino-acid chain; its full sequence is 3-dehydroquinate dehydratase (146 aa).

Tyrosine 24 serves as the catalytic Proton acceptor. Residues asparagine 73, histidine 79, and aspartate 86 each coordinate substrate. Catalysis depends on histidine 99, which acts as the Proton donor. Substrate-binding positions include leucine 100–serine 101 and arginine 110.

It belongs to the type-II 3-dehydroquinase family. In terms of assembly, homododecamer.

The catalysed reaction is 3-dehydroquinate = 3-dehydroshikimate + H2O. The protein operates within metabolic intermediate biosynthesis; chorismate biosynthesis; chorismate from D-erythrose 4-phosphate and phosphoenolpyruvate: step 3/7. Catalyzes a trans-dehydration via an enolate intermediate. The sequence is that of 3-dehydroquinate dehydratase from Shewanella baltica (strain OS195).